We begin with the raw amino-acid sequence, 187 residues long: Peroxisome assembly protein 22 (187 aa).

The chain crosses the membrane as a helical span at residues 7-29 (NTFFGLAALGALGLGYSVYKSFI).

It belongs to the peroxin-22 family. As to quaternary structure, interacts with PEX4.

The protein localises to the peroxisome membrane. Its function is as follows. Involved in peroxisome biogenesis. The chain is Peroxisome assembly protein 22 (PEX22) from Komagataella pastoris (Yeast).